The primary structure comprises 214 residues: 3,4-dihydroxy-2-butanone 4-phosphate synthase (214 aa).

D-ribulose 5-phosphate contacts are provided by residues 40–41, Asp-45, 153–157, and Glu-177; these read RE and RRGHT. Glu-41 lines the Mg(2+) pocket. Position 156 (His-156) interacts with Mg(2+).

The protein belongs to the DHBP synthase family. Homodimer. It depends on Mg(2+) as a cofactor. Mn(2+) is required as a cofactor.

The catalysed reaction is D-ribulose 5-phosphate = (2S)-2-hydroxy-3-oxobutyl phosphate + formate + H(+). The protein operates within cofactor biosynthesis; riboflavin biosynthesis; 2-hydroxy-3-oxobutyl phosphate from D-ribulose 5-phosphate: step 1/1. Its function is as follows. Catalyzes the conversion of D-ribulose 5-phosphate to formate and 3,4-dihydroxy-2-butanone 4-phosphate. This is 3,4-dihydroxy-2-butanone 4-phosphate synthase from Rhodospirillum rubrum (strain ATCC 11170 / ATH 1.1.1 / DSM 467 / LMG 4362 / NCIMB 8255 / S1).